An 808-amino-acid polypeptide reads, in one-letter code: Probable E3 ubiquitin-protein ligase MARCHF10 (808 aa).

3 disordered regions span residues 33–81 (LRRQ…LTEP), 101–268 (QTSV…RKAS), and 284–415 (SRRE…EVGV). Residues 34–49 (RRQEYRRDPNEKKRDQ) show a composition bias toward basic and acidic residues. Polar residues predominate over residues 237-249 (QAFQGKNSPQVLS). Basic and acidic residues-rich tracts occupy residues 330-349 (KNFE…RSEP) and 379-397 (LPDR…ENAK). Residues 651–721 (DSEEEGDLCR…EMCKQGLLVD (71 aa)) form an RING-CH-type zinc finger. Zn(2+) contacts are provided by Cys659, Cys662, Cys677, Cys679, His687, Cys690, Cys711, and Cys714. Residues 773–808 (ERERLSRNYPQPRTEENENSELGDGNEGSISQSQVV) form a disordered region.

The catalysed reaction is S-ubiquitinyl-[E2 ubiquitin-conjugating enzyme]-L-cysteine + [acceptor protein]-L-lysine = [E2 ubiquitin-conjugating enzyme]-L-cysteine + N(6)-ubiquitinyl-[acceptor protein]-L-lysine.. It functions in the pathway protein modification; protein ubiquitination. E3 ubiquitin-protein ligase. E3 ubiquitin ligases accept ubiquitin from an E2 ubiquitin-conjugating enzyme in the form of a thioester and then directly transfer the ubiquitin to targeted substrates. This is Probable E3 ubiquitin-protein ligase MARCHF10 from Homo sapiens (Human).